We begin with the raw amino-acid sequence, 162 residues long: Dihydrofolate reductase type 3 (162 aa).

The 159-residue stretch at 2–160 folds into the DHFR domain; that stretch reads LISLIAALAH…YACEFVTLSR (159 aa).

Belongs to the dihydrofolate reductase family. In terms of assembly, monomer.

The catalysed reaction is (6S)-5,6,7,8-tetrahydrofolate + NADP(+) = 7,8-dihydrofolate + NADPH + H(+). It participates in cofactor biosynthesis; tetrahydrofolate biosynthesis; 5,6,7,8-tetrahydrofolate from 7,8-dihydrofolate: step 1/1. Functionally, key enzyme in folate metabolism. Catalyzes an essential reaction for de novo glycine and purine synthesis, and for DNA precursor synthesis. In Salmonella typhimurium, this protein is Dihydrofolate reductase type 3 (dhfrIII).